Here is a 348-residue protein sequence, read N- to C-terminus: Histidinol-phosphate aminotransferase (348 aa).

Lysine 210 is subject to N6-(pyridoxal phosphate)lysine.

It belongs to the class-II pyridoxal-phosphate-dependent aminotransferase family. Histidinol-phosphate aminotransferase subfamily. In terms of assembly, homodimer. Pyridoxal 5'-phosphate is required as a cofactor.

It carries out the reaction L-histidinol phosphate + 2-oxoglutarate = 3-(imidazol-4-yl)-2-oxopropyl phosphate + L-glutamate. The protein operates within amino-acid biosynthesis; L-histidine biosynthesis; L-histidine from 5-phospho-alpha-D-ribose 1-diphosphate: step 7/9. The sequence is that of Histidinol-phosphate aminotransferase from Cytophaga hutchinsonii (strain ATCC 33406 / DSM 1761 / CIP 103989 / NBRC 15051 / NCIMB 9469 / D465).